Consider the following 429-residue polypeptide: Enolase (429 aa).

Gln163 is a binding site for (2R)-2-phosphoglycerate. Catalysis depends on Glu205, which acts as the Proton donor. Mg(2+)-binding residues include Asp242, Glu286, and Asp313. Positions 338, 367, 368, and 389 each coordinate (2R)-2-phosphoglycerate. Lys338 (proton acceptor) is an active-site residue.

Belongs to the enolase family. Mg(2+) is required as a cofactor.

It localises to the cytoplasm. It is found in the secreted. The protein resides in the cell surface. The catalysed reaction is (2R)-2-phosphoglycerate = phosphoenolpyruvate + H2O. It functions in the pathway carbohydrate degradation; glycolysis; pyruvate from D-glyceraldehyde 3-phosphate: step 4/5. In terms of biological role, catalyzes the reversible conversion of 2-phosphoglycerate (2-PG) into phosphoenolpyruvate (PEP). It is essential for the degradation of carbohydrates via glycolysis. This is Enolase from Thermoanaerobacter pseudethanolicus (strain ATCC 33223 / 39E) (Clostridium thermohydrosulfuricum).